The following is a 192-amino-acid chain: Large ribosomal subunit protein uL6 (192 aa).

Belongs to the universal ribosomal protein uL6 family. Component of the large ribosomal subunit.

It localises to the cytoplasm. Functionally, component of the large ribosomal subunit. The ribosome is a large ribonucleoprotein complex responsible for the synthesis of proteins in the cell. The sequence is that of Large ribosomal subunit protein uL6 (rpl9) from Ictalurus punctatus (Channel catfish).